The sequence spans 157 residues: Universal stress protein Sll1654 (157 aa).

This sequence belongs to the universal stress protein A family.

In Synechocystis sp. (strain ATCC 27184 / PCC 6803 / Kazusa), this protein is Universal stress protein Sll1654.